The following is a 358-amino-acid chain: tRNA-specific 2-thiouridylase MnmA (358 aa).

ATP contacts are provided by residues alanine 10–serine 17 and methionine 36. Cysteine 105 (nucleophile) is an active-site residue. Cysteine 105 and cysteine 202 form a disulfide bridge. Residue glycine 129 coordinates ATP. Positions lysine 152–glutamine 154 are interaction with tRNA. The active-site Cysteine persulfide intermediate is cysteine 202. Residues arginine 308 to tyrosine 309 form an interaction with tRNA region.

The protein belongs to the MnmA/TRMU family.

Its subcellular location is the cytoplasm. It catalyses the reaction S-sulfanyl-L-cysteinyl-[protein] + uridine(34) in tRNA + AH2 + ATP = 2-thiouridine(34) in tRNA + L-cysteinyl-[protein] + A + AMP + diphosphate + H(+). Its function is as follows. Catalyzes the 2-thiolation of uridine at the wobble position (U34) of tRNA, leading to the formation of s(2)U34. In Magnetococcus marinus (strain ATCC BAA-1437 / JCM 17883 / MC-1), this protein is tRNA-specific 2-thiouridylase MnmA.